We begin with the raw amino-acid sequence, 89 residues long: Small ribosomal subunit protein bS16 (89 aa).

The protein belongs to the bacterial ribosomal protein bS16 family.

The protein is Small ribosomal subunit protein bS16 of Psychrobacter arcticus (strain DSM 17307 / VKM B-2377 / 273-4).